The primary structure comprises 310 residues: Methionyl-tRNA formyltransferase (310 aa).

Position 114–117 (114–117 (SLLP)) interacts with (6S)-5,6,7,8-tetrahydrofolate.

Belongs to the Fmt family.

It carries out the reaction L-methionyl-tRNA(fMet) + (6R)-10-formyltetrahydrofolate = N-formyl-L-methionyl-tRNA(fMet) + (6S)-5,6,7,8-tetrahydrofolate + H(+). Its function is as follows. Attaches a formyl group to the free amino group of methionyl-tRNA(fMet). The formyl group appears to play a dual role in the initiator identity of N-formylmethionyl-tRNA by promoting its recognition by IF2 and preventing the misappropriation of this tRNA by the elongation apparatus. The protein is Methionyl-tRNA formyltransferase of Granulibacter bethesdensis (strain ATCC BAA-1260 / CGDNIH1).